The following is a 344-amino-acid chain: Sorting nexin-16 (344 aa).

The segment covering 1-10 (MATPYVPVPM) has biased composition (pro residues). Disordered regions lie at residues 1–49 (MATP…DSSV) and 83–105 (SIEY…NWED). Over residues 14 to 26 (NSASSFTNNRNQR) the composition is skewed to polar residues. The segment covering 27-40 (SSSFGSVSTSSNSS) has biased composition (low complexity). Residues 88-105 (ARPRDTEEQHPDALNWED) show a composition bias toward basic and acidic residues. Residues 105–218 (DRPSTPTILG…EFLCLDDPPG (114 aa)) form the PX domain. Positions 144, 146, and 184 each coordinate a 1,2-diacyl-sn-glycero-3-phospho-(1D-myo-inositol-3-phosphate). The residue at position 222 (serine 222) is a Phosphoserine. A coiled-coil region spans residues 223–278 (LEESRAFCETLEETNYHLQRELLEKQKEVESLKKLLGEKQLHIDALETRIRTLSLE).

Belongs to the sorting nexin family. Homooligomer. Interacts with EGFR.

The protein localises to the early endosome membrane. It is found in the late endosome membrane. The protein resides in the cytoplasm. It localises to the lysosome. Its function is as follows. May be involved in several stages of intracellular trafficking. Plays a role in protein transport from early to late endosomes. Plays a role in protein transport to the lysosome. Promotes degradation of EGFR after EGF signaling. This Rattus norvegicus (Rat) protein is Sorting nexin-16 (Snx16).